The primary structure comprises 619 residues: TOX high mobility group box family member 4 (619 aa).

Disordered stretches follow at residues 153–227 (LGLS…QKPV) and 304–337 (DMDPAPPSQTPSPPPVAAADPASPAPASTEPPAL). A Phosphothreonine modification is found at Thr176. Phosphoserine is present on residues Ser178, Ser181, and Ser182. Residues 183–193 (LHEDGVEEFRR) show a composition bias toward basic and acidic residues. Basic residues predominate over residues 208–218 (KQKAPKKRKKK). Positions 213–218 (KKRKKK) match the Nuclear localization signal motif. Positions 223–291 (PQKPVSAYAL…EYLKALAAYK (69 aa)) form a DNA-binding region, HMG box. The segment covering 307–319 (PAPPSQTPSPPPV) has biased composition (pro residues). Position 313 is a phosphothreonine (Thr313). Ser315 carries the post-translational modification Phosphoserine. The span at 320-337 (AAADPASPAPASTEPPAL) shows a compositional bias: low complexity. The residue at position 479 (Arg479) is an Asymmetric dimethylarginine. A disordered region spans residues 507-529 (PPPVESSPEQPVNNSPETHTVEE). Low complexity predominate over residues 512–524 (SSPEQPVNNSPET). Residues Ser548, Ser550, Ser558, Ser560, and Ser565 each carry the phosphoserine modification.

Component of the PNUTS-PP1 phosphatase complex, composed of PPP1R10/PNUTS, TOX4, WDR82 and PPP1CA or PPP1CB or PPP1CC. Interacts with PPP1R10/PNUTS. Interacts with FOXO1 and CREB1 (increased by cAMP); FOXO1 and CREB1 are required for full induction of TOX4-dependent activity and the interactions are inhibited by insulin.

It localises to the nucleus. Its subcellular location is the chromosome. Its activity is regulated as follows. In liver, recruited to target gene promoters following treatment with dexamethasone and cAMP. Binding is decreased in presence of insulin. Its function is as follows. Transcription factor that modulates cell fate reprogramming from the somatic state to the pluripotent and neuronal fate. In liver, controls the expression of hormone-regulated gluconeogenic genes such as G6PC1 and PCK1. This regulation is independent of the insulin receptor activation. Also acts as a regulatory component of protein phosphatase 1 (PP1) complexes. Component of the PNUTS-PP1 protein phosphatase complex, a PP1 complex that regulates RNA polymerase II transcription pause-release. PNUTS-PP1 also plays a role in the control of chromatin structure and cell cycle progression during the transition from mitosis into interphase. The sequence is that of TOX high mobility group box family member 4 (TOX4) from Bos taurus (Bovine).